The primary structure comprises 313 residues: Protein-methionine-sulfoxide reductase catalytic subunit MsrP (313 aa).

Positions 1-44 (MARWRPDMAEREATPEALYLRRREFLALGAAGAVGLLVARGARA) form a signal peptide, tat-type signal. Mo-molybdopterin contacts are provided by residues Asn76, 79–80 (YE), Cys134, Thr169, Asn217, Arg222, and 233–235 (GAK).

Belongs to the MsrP family. In terms of assembly, heterodimer of a catalytic subunit (MsrP) and a heme-binding subunit (MsrQ). The cofactor is Mo-molybdopterin. In terms of processing, predicted to be exported by the Tat system. The position of the signal peptide cleavage has not been experimentally proven.

It localises to the periplasm. The enzyme catalyses L-methionyl-[protein] + a quinone + H2O = L-methionyl-(S)-S-oxide-[protein] + a quinol. It carries out the reaction L-methionyl-[protein] + a quinone + H2O = L-methionyl-(R)-S-oxide-[protein] + a quinol. In terms of biological role, part of the MsrPQ system that repairs oxidized periplasmic proteins containing methionine sulfoxide residues (Met-O), using respiratory chain electrons. Thus protects these proteins from oxidative-stress damage caused by reactive species of oxygen and chlorine generated by the host defense mechanisms. MsrPQ is essential for the maintenance of envelope integrity under bleach stress, rescuing a wide series of structurally unrelated periplasmic proteins from methionine oxidation. The catalytic subunit MsrP is non-stereospecific, being able to reduce both (R-) and (S-) diastereoisomers of methionine sulfoxide. The polypeptide is Protein-methionine-sulfoxide reductase catalytic subunit MsrP (Anaeromyxobacter sp. (strain K)).